Consider the following 231-residue polypeptide: LexA repressor (231 aa).

The segment at residues 26–46 is a DNA-binding region (H-T-H motif); sequence FDEMKDALDLRSKSGIHRLIT. Catalysis depends on for autocatalytic cleavage activity residues Ser-152 and Lys-190.

The protein belongs to the peptidase S24 family. Homodimer.

It carries out the reaction Hydrolysis of Ala-|-Gly bond in repressor LexA.. Functionally, represses a number of genes involved in the response to DNA damage (SOS response), including recA and lexA. In the presence of single-stranded DNA, RecA interacts with LexA causing an autocatalytic cleavage which disrupts the DNA-binding part of LexA, leading to derepression of the SOS regulon and eventually DNA repair. This chain is LexA repressor, found in Bradyrhizobium diazoefficiens (strain JCM 10833 / BCRC 13528 / IAM 13628 / NBRC 14792 / USDA 110).